Consider the following 168-residue polypeptide: Large ribosomal subunit protein uL10 (168 aa).

The protein belongs to the universal ribosomal protein uL10 family. Part of the ribosomal stalk of the 50S ribosomal subunit. The N-terminus interacts with L11 and the large rRNA to form the base of the stalk. The C-terminus forms an elongated spine to which L12 dimers bind in a sequential fashion forming a multimeric L10(L12)X complex.

Forms part of the ribosomal stalk, playing a central role in the interaction of the ribosome with GTP-bound translation factors. In Clostridium acetobutylicum (strain ATCC 824 / DSM 792 / JCM 1419 / IAM 19013 / LMG 5710 / NBRC 13948 / NRRL B-527 / VKM B-1787 / 2291 / W), this protein is Large ribosomal subunit protein uL10.